We begin with the raw amino-acid sequence, 292 residues long: UDP-N-acetylenolpyruvoylglucosamine reductase (292 aa).

In terms of domain architecture, FAD-binding PCMH-type spans glutamine 21–aspartate 186. Arginine 165 is a catalytic residue. Serine 215 (proton donor) is an active-site residue. The active site involves glutamate 285.

Belongs to the MurB family. FAD serves as cofactor.

It localises to the cytoplasm. The catalysed reaction is UDP-N-acetyl-alpha-D-muramate + NADP(+) = UDP-N-acetyl-3-O-(1-carboxyvinyl)-alpha-D-glucosamine + NADPH + H(+). The protein operates within cell wall biogenesis; peptidoglycan biosynthesis. Its function is as follows. Cell wall formation. This chain is UDP-N-acetylenolpyruvoylglucosamine reductase, found in Leuconostoc mesenteroides subsp. mesenteroides (strain ATCC 8293 / DSM 20343 / BCRC 11652 / CCM 1803 / JCM 6124 / NCDO 523 / NBRC 100496 / NCIMB 8023 / NCTC 12954 / NRRL B-1118 / 37Y).